We begin with the raw amino-acid sequence, 200 residues long: Large ribosomal subunit protein uL4 (200 aa).

The segment at 38–67 (GRQGSKAQKTRSEVSGGGKKPWRQKGTGRA) is disordered.

The protein belongs to the universal ribosomal protein uL4 family. In terms of assembly, part of the 50S ribosomal subunit.

Functionally, one of the primary rRNA binding proteins, this protein initially binds near the 5'-end of the 23S rRNA. It is important during the early stages of 50S assembly. It makes multiple contacts with different domains of the 23S rRNA in the assembled 50S subunit and ribosome. Its function is as follows. Forms part of the polypeptide exit tunnel. The chain is Large ribosomal subunit protein uL4 from Pseudomonas paraeruginosa (strain DSM 24068 / PA7) (Pseudomonas aeruginosa (strain PA7)).